A 245-amino-acid polypeptide reads, in one-letter code: Thiopurine S-methyltransferase (245 aa).

Phosphoserine is present on serine 14. 29 to 40 contacts S-adenosyl-L-methionine; that stretch reads WQDKWVNGKTAF. Position 40 (phenylalanine 40) interacts with substrate. At lysine 58 the chain carries N6-acetyllysine. S-adenosyl-L-methionine contacts are provided by residues leucine 69, glutamate 90, 134-135, and arginine 152; that span reads SI.

Belongs to the class I-like SAM-binding methyltransferase superfamily. TPMT family. In terms of assembly, monomer.

Its subcellular location is the cytoplasm. The enzyme catalyses S-adenosyl-L-methionine + a thiopurine = S-adenosyl-L-homocysteine + a thiopurine S-methylether.. This is Thiopurine S-methyltransferase (TPMT) from Chlorocebus aethiops (Green monkey).